Reading from the N-terminus, the 61-residue chain is MAKTALKVKAARKPKFGVRAYTRCQRCGRPHSVYRKFGLCRICLREMAHAGQLPGVTKSSW.

4 residues coordinate Zn(2+): C24, C27, C40, and C43.

This sequence belongs to the universal ribosomal protein uS14 family. Zinc-binding uS14 subfamily. As to quaternary structure, part of the 30S ribosomal subunit. Contacts proteins S3 and S10. Requires Zn(2+) as cofactor.

Functionally, binds 16S rRNA, required for the assembly of 30S particles and may also be responsible for determining the conformation of the 16S rRNA at the A site. The polypeptide is Small ribosomal subunit protein uS14B (Cutibacterium acnes (strain DSM 16379 / KPA171202) (Propionibacterium acnes)).